A 183-amino-acid chain; its full sequence is Nucleoside triphosphate pyrophosphatase (183 aa).

Aspartate 71 functions as the Proton acceptor in the catalytic mechanism.

It belongs to the Maf family. It depends on a divalent metal cation as a cofactor.

The protein localises to the cytoplasm. The enzyme catalyses a ribonucleoside 5'-triphosphate + H2O = a ribonucleoside 5'-phosphate + diphosphate + H(+). The catalysed reaction is a 2'-deoxyribonucleoside 5'-triphosphate + H2O = a 2'-deoxyribonucleoside 5'-phosphate + diphosphate + H(+). Nucleoside triphosphate pyrophosphatase. May have a dual role in cell division arrest and in preventing the incorporation of modified nucleotides into cellular nucleic acids. In Campylobacter jejuni subsp. doylei (strain ATCC BAA-1458 / RM4099 / 269.97), this protein is Nucleoside triphosphate pyrophosphatase.